The sequence spans 419 residues: Histidine--tRNA ligase (419 aa).

Belongs to the class-II aminoacyl-tRNA synthetase family. Homodimer.

The protein localises to the cytoplasm. The catalysed reaction is tRNA(His) + L-histidine + ATP = L-histidyl-tRNA(His) + AMP + diphosphate + H(+). This is Histidine--tRNA ligase from Desulfatibacillum aliphaticivorans.